We begin with the raw amino-acid sequence, 141 residues long: Hemoglobin subunit alpha (141 aa).

Residues 1-141 enclose the Globin domain; it reads VLSAADKTNV…VSTVLTSKYR (141 aa). A Phosphoserine modification is found at S3. N6-succinyllysine is present on K7. T8 is modified (phosphothreonine). K11 bears the N6-succinyllysine mark. K16 is modified (N6-acetyllysine; alternate). K16 is modified (N6-succinyllysine; alternate). At Y24 the chain carries Phosphotyrosine. S35 carries the phosphoserine modification. Residue K40 is modified to N6-succinyllysine. S49 is subject to Phosphoserine. Residue H58 coordinates O2. H87 serves as a coordination point for heme b. S102 carries the phosphoserine modification. Residue T108 is modified to Phosphothreonine. A phosphoserine mark is found at S124 and S131. Residues T134 and T137 each carry the phosphothreonine modification. S138 is subject to Phosphoserine.

It belongs to the globin family. As to quaternary structure, heterotetramer of two alpha chains and two beta chains. As to expression, red blood cells.

Functionally, involved in oxygen transport from the lung to the various peripheral tissues. The polypeptide is Hemoglobin subunit alpha (Tamiasciurus hudsonicus (American red squirrel)).